Consider the following 451-residue polypeptide: Protein SAR DEFICIENT 1 (451 aa).

Residues 149–270 (DKWTSDEFES…AFHKKLSSRH (122 aa)) form a DNA-binding region.

It belongs to the plant ACBP60 protein family. (Microbial infection) Interacts with V.dahliae SCP41.

The protein localises to the nucleus. Its function is as follows. Transcription activator that binds DNA in a sequence-specific manner, 5'-GAAATTTTGG-3', to promote the expression of target genes. Recruited to the promoter of ICS1 and other defense-related genes (e.g. PR1 and SID2) in response to both biotic (e.g. Pseudomonas syringae pv. maculicola ES4326) and abiotic stresses (e.g. UV-B), thus triggering slow defense responses by stimulating salicylic acid (SA) biosynthesis. Required for basal and systemic acquired resistance to P.syringae pv. maculicola and Hyaloperonospora arabidopsidis. This chain is Protein SAR DEFICIENT 1, found in Arabidopsis thaliana (Mouse-ear cress).